Here is a 433-residue protein sequence, read N- to C-terminus: MRIYQPTLLIFTTVVLLSISAVAPGGSRQLLYTRDDPITIPPYLIFENVRLERAYVALQAWKRAMISDPWNLTTNWFGSRVCDYNGVVCSESLDDPLVKTVSGVDLNQGDIAGHLPEELGLLTDIALFHVNSNRFCGTLPVGFSQLSLLFELDLSNNRFAGKFPEVVIGLPKLKYLDLRYNEFEGELPESLFDKDLDALFLNSNRFRSKIPVNMGNSPVSVLVLASNRFEGCIPPSFGKMGKTLNEIILMDNGLQSCIPNDMGLLQNVTVLDISYNWLVGELPKSMGQMENLEVLNVERNMLSGLIPDELCSLEKLRDFRYGSNYFTGEPATCRYLENYNYTMNCFKDVRDQRSMMECKMFLSKPVDCDSFKCSPGSSCFSPPPSQISPSSQPLAPAPSPTSPPLSTPPPARPCPPVYSPPPPPPLSLAPSMN.

Positions 1-21 (MRIYQPTLLIFTTVVLLSISA) are cleaved as a signal peptide. Asparagine 71 carries an N-linked (GlcNAc...) asparagine glycan. LRR repeat units lie at residues 98–122 (VKTV…LGLL), 123–145 (TDIA…GFSQ), 146–170 (LSLL…VIGL), 171–194 (PKLK…LFDK), 196–217 (LDAL…MGNS), 219–239 (VSVL…SFGK), 241–265 (GKTL…MGLL), 266–289 (QNVT…MGQM), and 290–313 (ENLE…LCSL). N-linked (GlcNAc...) asparagine glycosylation is present at asparagine 267. N-linked (GlcNAc...) asparagine glycosylation is present at asparagine 340. Positions 380–433 (FSPPPSQISPSSQPLAPAPSPTSPPLSTPPPARPCPPVYSPPPPPPLSLAPSMN) are disordered. The tract at residues 381–433 (SPPPSQISPSSQPLAPAPSPTSPPLSTPPPARPCPPVYSPPPPPPLSLAPSMN) is contains the Ser-Pro(4) repeats. Pro residues predominate over residues 395–427 (APAPSPTSPPLSTPPPARPCPPVYSPPPPPPLS).

In terms of processing, hydroxylated on proline residues in the S-P-P-P-P repeat. O-glycosylated on hydroxyprolines. In terms of tissue distribution, expressed in flowers and pollen.

The protein localises to the secreted. Its subcellular location is the cell wall. Functionally, modulates cell morphogenesis by regulating cell wall formation and assembly, and/or growth polarization. The sequence is that of Leucine-rich repeat extensin-like protein 7 (LRX7) from Arabidopsis thaliana (Mouse-ear cress).